Reading from the N-terminus, the 217-residue chain is Probable transaldolase (217 aa).

Lysine 83 functions as the Schiff-base intermediate with substrate in the catalytic mechanism.

The protein belongs to the transaldolase family. Type 3B subfamily.

It localises to the cytoplasm. It catalyses the reaction D-sedoheptulose 7-phosphate + D-glyceraldehyde 3-phosphate = D-erythrose 4-phosphate + beta-D-fructose 6-phosphate. Its pathway is carbohydrate degradation; pentose phosphate pathway; D-glyceraldehyde 3-phosphate and beta-D-fructose 6-phosphate from D-ribose 5-phosphate and D-xylulose 5-phosphate (non-oxidative stage): step 2/3. Transaldolase is important for the balance of metabolites in the pentose-phosphate pathway. This Clostridium botulinum (strain Okra / Type B1) protein is Probable transaldolase.